We begin with the raw amino-acid sequence, 377 residues long: tRNA-specific 2-thiouridylase MnmA (377 aa).

ATP-binding positions include 9 to 16 and L35; that span reads AMSGGVDS. C105 acts as the Nucleophile in catalysis. C105 and C201 form a disulfide bridge. Residue G129 coordinates ATP. The tract at residues 151–153 is interaction with tRNA; sequence KNQ. Catalysis depends on C201, which acts as the Cysteine persulfide intermediate. Residues 307–308 are interaction with tRNA; the sequence is RY.

This sequence belongs to the MnmA/TRMU family.

The protein localises to the cytoplasm. It carries out the reaction S-sulfanyl-L-cysteinyl-[protein] + uridine(34) in tRNA + AH2 + ATP = 2-thiouridine(34) in tRNA + L-cysteinyl-[protein] + A + AMP + diphosphate + H(+). Its function is as follows. Catalyzes the 2-thiolation of uridine at the wobble position (U34) of tRNA, leading to the formation of s(2)U34. This chain is tRNA-specific 2-thiouridylase MnmA, found in Leptospira borgpetersenii serovar Hardjo-bovis (strain JB197).